A 318-amino-acid polypeptide reads, in one-letter code: Ribonuclease Z (318 aa).

7 residues coordinate Zn(2+): His62, His64, Asp66, His67, His139, Asp210, and His268. Asp66 acts as the Proton acceptor in catalysis.

This sequence belongs to the RNase Z family. In terms of assembly, homodimer. Zn(2+) serves as cofactor.

The catalysed reaction is Endonucleolytic cleavage of RNA, removing extra 3' nucleotides from tRNA precursor, generating 3' termini of tRNAs. A 3'-hydroxy group is left at the tRNA terminus and a 5'-phosphoryl group is left at the trailer molecule.. In terms of biological role, zinc phosphodiesterase, which displays some tRNA 3'-processing endonuclease activity. Probably involved in tRNA maturation, by removing a 3'-trailer from precursor tRNA. In Gloeothece citriformis (strain PCC 7424) (Cyanothece sp. (strain PCC 7424)), this protein is Ribonuclease Z.